The following is a 516-amino-acid chain: uncharacterized protein (516 aa).

Residues 31–185 (ACIFLSKFDM…LDKFDIFEKF (155 aa)) form the uDENN domain. The region spanning 211–365 (HLVEYLPYWT…LEVYEKLILG (155 aa)) is the cDENN domain. One can recognise a dDENN domain in the interval 367 to 513 (LQEDASTNAT…DISNLPECLG (147 aa)). 2 S-palmitoyl cysteine lipidation sites follow: Cys511 and Cys516.

In terms of processing, palmitoylated by AKR1.

Its subcellular location is the lipid droplet. May be involved in lipid metabolism. This is an uncharacterized protein from Saccharomyces cerevisiae (strain ATCC 204508 / S288c) (Baker's yeast).